The chain runs to 347 residues: NADH-ubiquinone oxidoreductase chain 2 (347 aa).

A run of 11 helical transmembrane segments spans residues 3-23, 25-45, 59-79, 96-116, 122-142, 149-169, 178-198, 201-221, 237-257, 274-294, and 323-343; these read PPIFIIIMSTVISGTVIVMTS, HWMLTWIGFEMNMLAIIPILM, YFLTQATASMLLMMGIIINLL, ILMTTALAMKLGLAPFHFWVP, ISLSSGMILLTWQKIAPLSIL, INPHLLLPMAILSVLIGGWGG, IMAYSSIAHMGWMAAILLYNP, MFLNLIIYITMTLTTFMLFML, APLITSLILTLMLSLGGLPPL, EMIILPTFLAITALLNLYFYM, and TIFLPPLIIISTMMLPLTPMI.

It belongs to the complex I subunit 2 family. Core subunit of respiratory chain NADH dehydrogenase (Complex I) which is composed of 45 different subunits. Interacts with TMEM242.

It is found in the mitochondrion inner membrane. It carries out the reaction a ubiquinone + NADH + 5 H(+)(in) = a ubiquinol + NAD(+) + 4 H(+)(out). Core subunit of the mitochondrial membrane respiratory chain NADH dehydrogenase (Complex I) which catalyzes electron transfer from NADH through the respiratory chain, using ubiquinone as an electron acceptor. Essential for the catalytic activity and assembly of complex I. This is NADH-ubiquinone oxidoreductase chain 2 from Viverra tangalunga (Malayan civet).